The following is a 642-amino-acid chain: Nocturnin (642 aa).

The interval 50-87 (LEDDDKPPQLFSVTDEPPSPNEEDYKPPNHHEDDGKLA) is disordered. Over residues 72-87 (EDYKPPNHHEDDGKLA) the composition is skewed to basic and acidic residues. Glu363 contributes to the Mg(2+) binding site. Substrate-binding positions include Glu363, Asn430, 453–456 (HLKA), 491–493 (DFN), and His600. Residues 611–642 (PPTENGKESGSGSGSDGENETEVEGSKHGSIQ) are disordered.

Belongs to the CCR4/nocturin family. As to quaternary structure, associates to the CCR4-NOT complex composed of at least Pop2/Caf1-55, Ccr4, Not1, Rga/Not2, and Not3. The cofactor is Mg(2+). Expressed in the head, in the dorsal neurons DN3, a subgroup of clock neurons (at protein level). Ubiquitously expressed in both males and females.

The protein resides in the cytoplasm. The catalysed reaction is NADP(+) + H2O = phosphate + NAD(+). The enzyme catalyses NADPH + H2O = phosphate + NADH. Phosphatase which catalyzes the conversion of NADP(+) to NAD(+) and of NADPH to NADH. Shows a small preference for NADPH over NADP(+). Because of its association with the CCR4-NOT complex, has a role in mRNA deadenylation and decay. Required at the pupal stage for proper wing morphogenesis after eclosion. Its function is as follows. Doesn't have a role in light-mediated behavioral response. In terms of biological role, in dorsal neurons, contributes to the light-mediated behavioral response. The polypeptide is Nocturnin (Drosophila melanogaster (Fruit fly)).